Consider the following 86-residue polypeptide: uncharacterized protein (86 aa).

The N-terminal stretch at 1 to 25 (MNLRKILLSSALSLGMLVSAAPVLA) is a signal peptide.

This is an uncharacterized protein from Bacillus subtilis (strain 168).